We begin with the raw amino-acid sequence, 359 residues long: 3-dehydroquinate synthase (359 aa).

Residues 71–76 (DGEQHK), 105–109 (GVIGD), 129–130 (TT), lysine 142, and lysine 151 each bind NAD(+). 3 residues coordinate Zn(2+): glutamate 184, histidine 247, and histidine 264.

Belongs to the sugar phosphate cyclases superfamily. Dehydroquinate synthase family. Requires NAD(+) as cofactor. The cofactor is Co(2+). It depends on Zn(2+) as a cofactor.

It is found in the cytoplasm. It catalyses the reaction 7-phospho-2-dehydro-3-deoxy-D-arabino-heptonate = 3-dehydroquinate + phosphate. It functions in the pathway metabolic intermediate biosynthesis; chorismate biosynthesis; chorismate from D-erythrose 4-phosphate and phosphoenolpyruvate: step 2/7. Its function is as follows. Catalyzes the conversion of 3-deoxy-D-arabino-heptulosonate 7-phosphate (DAHP) to dehydroquinate (DHQ). This is 3-dehydroquinate synthase from Chromobacterium violaceum (strain ATCC 12472 / DSM 30191 / JCM 1249 / CCUG 213 / NBRC 12614 / NCIMB 9131 / NCTC 9757 / MK).